Consider the following 630-residue polypeptide: Glutathione hydrolase proenzyme 1 (630 aa).

At methionine 1–serine 49 the chain is on the cytoplasmic side. The helical; Signal-anchor for type II membrane protein transmembrane segment at isoleucine 50–leucine 70 threads the bilayer. Over serine 71–tyrosine 630 the chain is Lumenal. A glycan (N-linked (GlcNAc...) asparagine) is linked at asparagine 156. Residue arginine 165 coordinates L-glutamate. 4 N-linked (GlcNAc...) asparagine glycosylation sites follow: asparagine 180, asparagine 315, asparagine 397, and asparagine 417. The active-site Nucleophile is threonine 441. L-glutamate contacts are provided by residues serine 459, asparagine 461, aspartate 483, serine 511–serine 512, and glycine 532–glycine 533. N-linked (GlcNAc...) asparagine glycosylation is present at asparagine 612.

This sequence belongs to the gamma-glutamyltransferase family. As to quaternary structure, heterodimer composed of the light and heavy chains. The active site is located in the light chain. In terms of processing, cleaved by autocatalysis into a large and a small subunit.

Its subcellular location is the endoplasmic reticulum membrane. It carries out the reaction an N-terminal (5-L-glutamyl)-[peptide] + an alpha-amino acid = 5-L-glutamyl amino acid + an N-terminal L-alpha-aminoacyl-[peptide]. It catalyses the reaction glutathione + H2O = L-cysteinylglycine + L-glutamate. The catalysed reaction is an S-substituted glutathione + H2O = an S-substituted L-cysteinylglycine + L-glutamate. Its pathway is sulfur metabolism; glutathione metabolism. Its function is as follows. Catalyzes the transfer of the gamma-glutamyl moiety of glutathione (GSH) and other gamma-glutamyl compounds to amino acids and peptides. Major GSH-degrading enzyme, catalyzing the hydrolytic release of L-glutamate from GSH. The chain is Glutathione hydrolase proenzyme 1 (ggt1) from Schizosaccharomyces pombe (strain 972 / ATCC 24843) (Fission yeast).